The following is a 144-amino-acid chain: Putative pre-16S rRNA nuclease (144 aa).

Belongs to the YqgF nuclease family.

The protein resides in the cytoplasm. Functionally, could be a nuclease involved in processing of the 5'-end of pre-16S rRNA. The sequence is that of Putative pre-16S rRNA nuclease from Lacticaseibacillus casei (strain BL23) (Lactobacillus casei).